Consider the following 425-residue polypeptide: UPF0597 protein Moth_1414 (425 aa).

It belongs to the UPF0597 family.

The sequence is that of UPF0597 protein Moth_1414 from Moorella thermoacetica (strain ATCC 39073 / JCM 9320).